Reading from the N-terminus, the 178-residue chain is MSGGKYVDSEGHLYTVPIREQGNIYKPNNKAMAEEINEKQVYDAHTKEIDLVNRDPKHLNDDVVKIDFEDVIAEPEGTHSFDGIWKASFTTFTVTKYWFYRLLSALFGIPMALIWGIYFAILSFLHIWAVVPCIKSFLIEIQCISRVYSIYVHTFCDPFFEAVGKIFSNIRINMQKEI.

Serine 2 is modified (N-acetylserine). At serine 2 the chain carries Phosphoserine. The required for homooligomerization stretch occupies residues 2–94 (SGGKYVDSEG…WKASFTTFTV (93 aa)). Topologically, residues 2–104 (SGGKYVDSEG…TKYWFYRLLS (103 aa)) are cytoplasmic. At lysine 5 the chain carries N6-acetyllysine; alternate. Lysine 5 participates in a covalent cross-link: Glycyl lysine isopeptide (Lys-Gly) (interchain with G-Cter in ubiquitin); alternate. Tyrosine 6 carries the phosphotyrosine modification. Position 9 is a phosphoserine (serine 9). Tyrosine 14 is subject to Phosphotyrosine; by ABL1. Tyrosine 25 carries the post-translational modification Phosphotyrosine. Residues lysine 26, lysine 30, lysine 39, lysine 47, and lysine 57 each participate in a glycyl lysine isopeptide (Lys-Gly) (interchain with G-Cter in ubiquitin) cross-link. Residues 82 to 94 (DGIWKASFTTFTV) are interaction with CAVIN3. Residues 105–125 (ALFGIPMALIWGIYFAILSFL) constitute an intramembrane region (helical). The Cytoplasmic portion of the chain corresponds to 126-178 (HIWAVVPCIKSFLIEIQCISRVYSIYVHTFCDPFFEAVGKIFSNIRINMQKEI). Positions 131-142 (VPCIKSFLIEIQ) are interacts with SPRY1, SPRY2, SPRY3 and SPRY4. 3 S-palmitoyl cysteine lipidation sites follow: cysteine 133, cysteine 143, and cysteine 156. The interacts with SPRY1, SPRY2, and SPRY4 stretch occupies residues 149 to 160 (SIYVHTFCDPFF). The interacts with SPRY1, SPRY2, SPRY3 and SPRY4 stretch occupies residues 167-178 (FSNIRINMQKEI).

It belongs to the caveolin family. Homooligomer. Interacts with GLIPR2. Interacts with NOSTRIN. Interacts with SNAP25 and STX1A. Interacts (via the N-terminus) with DPP4; the interaction is direct. Interacts with CTNNB1, CDH1 and JUP. Interacts with PACSIN2; this interaction induces membrane tubulation. Interacts with SLC7A9. Interacts with BMX and BTK. Interacts with TGFBR1. Interacts with CAVIN3 (via leucine-zipper domain) in a cholesterol-sensitive manner. Interacts with CAVIN1. Interacts with EHD2 in a cholesterol-dependent manner. Forms a ternary complex with UBXN6 and VCP; mediates CAV1 targeting to lysosomes for degradation. Interacts with ABCG1; this interaction regulates ABCG1-mediated cholesterol efflux. Interacts with NEU3; this interaction enhances NEU3 sialidase activity within caveola. Interacts (via C-terminus) with SPRY1, SPRY2 (via C-terminus), SPRY3, and SPRY4. Interacts with IGFBP5; this interaction allows trafficking of IGFBP5 from the plasma membrane to the nucleus. In terms of processing, phosphorylated at Tyr-14 by ABL1 in response to oxidative stress. Ubiquitinated. Undergo monoubiquitination and multi- and/or polyubiquitination. Monoubiquitination of N-terminal lysines promotes integration in a ternary complex with UBXN6 and VCP which promotes oligomeric CAV1 targeting to lysosomes for degradation. Ubiquitinated by ZNRF1; leading to degradation and modulation of the TLR4-mediated immune response.

It is found in the golgi apparatus membrane. Its subcellular location is the cell membrane. It localises to the membrane. The protein resides in the caveola. The protein localises to the membrane raft. Its function is as follows. May act as a scaffolding protein within caveolar membranes. Forms a stable heterooligomeric complex with CAV2 that targets to lipid rafts and drives caveolae formation. Mediates the recruitment of CAVIN proteins (CAVIN1/2/3/4) to the caveolae. Interacts directly with G-protein alpha subunits and can functionally regulate their activity. Involved in the costimulatory signal essential for T-cell receptor (TCR)-mediated T-cell activation. Its binding to DPP4 induces T-cell proliferation and NF-kappa-B activation in a T-cell receptor/CD3-dependent manner. Recruits CTNNB1 to caveolar membranes and may regulate CTNNB1-mediated signaling through the Wnt pathway. Negatively regulates TGFB1-mediated activation of SMAD2/3 by mediating the internalization of TGFBR1 from membrane rafts leading to its subsequent degradation. Binds 20(S)-hydroxycholesterol (20(S)-OHC). The chain is Caveolin-1 (CAV1) from Felis catus (Cat).